A 203-amino-acid polypeptide reads, in one-letter code: SCO2-like protein RT0576 (203 aa).

Residues 42-203 (KDNIKIGEAF…KEIMEFLRNE (162 aa)) enclose the Thioredoxin domain. Cu cation contacts are provided by C80, C84, and H170.

It belongs to the SCO1/2 family.

The sequence is that of SCO2-like protein RT0576 from Rickettsia typhi (strain ATCC VR-144 / Wilmington).